Consider the following 133-residue polypeptide: ATP synthase epsilon chain (133 aa).

Residues 103 to 133 are disordered; that stretch reads VSQMEGQEPSTEKIKAQQNFNRARARVQATK.

This sequence belongs to the ATPase epsilon chain family. As to quaternary structure, F-type ATPases have 2 components, CF(1) - the catalytic core - and CF(0) - the membrane proton channel. CF(1) has five subunits: alpha(3), beta(3), gamma(1), delta(1), epsilon(1). CF(0) has three main subunits: a, b and c.

It is found in the cellular thylakoid membrane. In terms of biological role, produces ATP from ADP in the presence of a proton gradient across the membrane. The chain is ATP synthase epsilon chain from Prochlorococcus marinus (strain MIT 9313).